Reading from the N-terminus, the 235-residue chain is Small ribosomal subunit protein uS3 (235 aa).

The KH type-2 domain occupies 39-107; it reads IREILHKELK…DVVINIVEIR (69 aa). Residues 215–235 are disordered; that stretch reads QDKRMAESDGGGSSRPRRDAA.

It belongs to the universal ribosomal protein uS3 family. Part of the 30S ribosomal subunit. Forms a tight complex with proteins S10 and S14.

Its function is as follows. Binds the lower part of the 30S subunit head. Binds mRNA in the 70S ribosome, positioning it for translation. The polypeptide is Small ribosomal subunit protein uS3 (Rhodopseudomonas palustris (strain TIE-1)).